We begin with the raw amino-acid sequence, 502 residues long: Glycerol kinase (502 aa).

Residue threonine 14 coordinates ADP. ATP contacts are provided by threonine 14, threonine 15, and serine 16. Position 14 (threonine 14) interacts with sn-glycerol 3-phosphate. Residue arginine 18 coordinates ADP. The sn-glycerol 3-phosphate site is built by arginine 84, glutamate 85, tyrosine 136, and aspartate 246. Residues arginine 84, glutamate 85, tyrosine 136, aspartate 246, and glutamine 247 each coordinate glycerol. Residues threonine 268 and glycine 311 each coordinate ADP. ATP is bound by residues threonine 268, glycine 311, glutamine 315, and glycine 412. 2 residues coordinate ADP: glycine 412 and asparagine 416.

This sequence belongs to the FGGY kinase family. In terms of assembly, homotetramer and homodimer (in equilibrium). Heterodimer with EIIA-Glc. Binds 1 zinc ion per glycerol kinase EIIA-Glc dimer. The zinc ion is important for dimerization.

It carries out the reaction glycerol + ATP = sn-glycerol 3-phosphate + ADP + H(+). It participates in polyol metabolism; glycerol degradation via glycerol kinase pathway; sn-glycerol 3-phosphate from glycerol: step 1/1. Activity of this regulatory enzyme is affected by several metabolites. Allosterically and non-competitively inhibited by fructose 1,6-bisphosphate (FBP) and unphosphorylated phosphocarrier protein EIIA-Glc (III-Glc), an integral component of the bacterial phosphotransferase (PTS) system. Functionally, key enzyme in the regulation of glycerol uptake and metabolism. Catalyzes the phosphorylation of glycerol to yield sn-glycerol 3-phosphate. The polypeptide is Glycerol kinase (Shigella flexneri).